A 278-amino-acid polypeptide reads, in one-letter code: UPF0276 protein Shew_2240 (278 aa).

The protein belongs to the UPF0276 family.

The chain is UPF0276 protein Shew_2240 from Shewanella loihica (strain ATCC BAA-1088 / PV-4).